The sequence spans 255 residues: Acetylglutamate kinase (255 aa).

Substrate contacts are provided by residues 40–41 (GG), R62, and N153.

This sequence belongs to the acetylglutamate kinase family. ArgB subfamily.

The protein resides in the cytoplasm. It catalyses the reaction N-acetyl-L-glutamate + ATP = N-acetyl-L-glutamyl 5-phosphate + ADP. Its pathway is amino-acid biosynthesis; L-arginine biosynthesis; N(2)-acetyl-L-ornithine from L-glutamate: step 2/4. Functionally, catalyzes the ATP-dependent phosphorylation of N-acetyl-L-glutamate. This is Acetylglutamate kinase from Bacillus anthracis (strain A0248).